A 442-amino-acid polypeptide reads, in one-letter code: Probable D-serine dehydratase (442 aa).

Lysine 115 is subject to N6-(pyridoxal phosphate)lysine.

It belongs to the serine/threonine dehydratase family. DsdA subfamily. Requires pyridoxal 5'-phosphate as cofactor.

The catalysed reaction is D-serine = pyruvate + NH4(+). This chain is Probable D-serine dehydratase, found in Halalkalibacterium halodurans (strain ATCC BAA-125 / DSM 18197 / FERM 7344 / JCM 9153 / C-125) (Bacillus halodurans).